The primary structure comprises 326 residues: uncharacterized protein (326 aa).

28-35 (GPINSGKT) is a binding site for ATP.

Belongs to the archaeal ATPase family.

This is an uncharacterized protein from Pyrococcus abyssi (strain GE5 / Orsay).